Consider the following 285-residue polypeptide: Complement C1q tumor necrosis factor-related protein 2 (285 aa).

The first 15 residues, 1–15, serve as a signal peptide directing secretion; that stretch reads MIPWVLLACALPCAA. Residues 33-144 are disordered; sequence QLVCSLPGPQ…PGLPGPCSCG (112 aa). The Collagen-like domain maps to 40–141; the sequence is GPQGPPGPPG…KGEPGLPGPC (102 aa). The segment covering 41–51 has biased composition (pro residues); sequence PQGPPGPPGAP. Positions 53-65 are enriched in low complexity; that stretch reads PSGMMGRMGFPGK. Residues 66–78 show a composition bias toward basic and acidic residues; it reads DGQDGHDGDRGDS. Over residues 84–120 the composition is skewed to low complexity; that stretch reads PGRTGNRGKPGPKGKAGAIGRAGPRGPKGVNGTPGKH. The C1q domain maps to 145 to 281; the sequence is SGHTKSAFSV…GFLIYADQDD (137 aa).

As to quaternary structure, may interact with ERFE. As to expression, expressed in adipose tissue.

It localises to the secreted. Involved in the regulation of lipid metabolism in adipose tissue and liver. This is Complement C1q tumor necrosis factor-related protein 2 (C1QTNF2) from Homo sapiens (Human).